We begin with the raw amino-acid sequence, 135 residues long: Large-conductance mechanosensitive channel (135 aa).

2 consecutive transmembrane segments (helical) span residues 10–30 (FAMRGNVVDLAVGVIIGAAFG) and 76–96 (GVFIQNVFDFVIVAFAIFLAI).

The protein belongs to the MscL family. In terms of assembly, homopentamer.

It localises to the cell inner membrane. Its function is as follows. Channel that opens in response to stretch forces in the membrane lipid bilayer. May participate in the regulation of osmotic pressure changes within the cell. This Cronobacter sakazakii (strain ATCC BAA-894) (Enterobacter sakazakii) protein is Large-conductance mechanosensitive channel.